Here is a 547-residue protein sequence, read N- to C-terminus: Probable bifunctional tRNA threonylcarbamoyladenosine biosynthesis protein (547 aa).

Residues 1–329 (MKKTFILGIE…FRTDDVKVTW (329 aa)) form a kae1 region. Fe cation is bound by residues His-113, His-117, and Tyr-134. L-threonylcarbamoyladenylate-binding positions include 134–138 (YVSGA), Asp-166, Gly-179, Glu-183, and Asn-262. Asp-290 contributes to the Fe cation binding site. The region spanning 340 to 547 (EISPETFFRM…EEIKKRARYA (208 aa)) is the Protein kinase domain. ATP-binding positions include 355 to 363 (LDNGAEAVV) and Lys-377. Residue Asp-464 is the Proton acceptor; for kinase activity of the active site.

It in the N-terminal section; belongs to the KAE1 / TsaD family. The protein in the C-terminal section; belongs to the protein kinase superfamily. Tyr protein kinase family. BUD32 subfamily. As to quaternary structure, component of the KEOPS complex that consists of Kae1, Bud32, Cgi121 and Pcc1; the whole complex dimerizes. Fe(2+) serves as cofactor.

It is found in the cytoplasm. The enzyme catalyses L-seryl-[protein] + ATP = O-phospho-L-seryl-[protein] + ADP + H(+). The catalysed reaction is L-threonyl-[protein] + ATP = O-phospho-L-threonyl-[protein] + ADP + H(+). It catalyses the reaction L-threonylcarbamoyladenylate + adenosine(37) in tRNA = N(6)-L-threonylcarbamoyladenosine(37) in tRNA + AMP + H(+). In terms of biological role, required for the formation of a threonylcarbamoyl group on adenosine at position 37 (t(6)A37) in tRNAs that read codons beginning with adenine. Is a component of the KEOPS complex that is probably involved in the transfer of the threonylcarbamoyl moiety of threonylcarbamoyl-AMP (TC-AMP) to the N6 group of A37. The Kae1 domain likely plays a direct catalytic role in this reaction. The Bud32 domain probably displays kinase activity that regulates Kae1 function. The protein is Probable bifunctional tRNA threonylcarbamoyladenosine biosynthesis protein of Methanosarcina mazei (strain ATCC BAA-159 / DSM 3647 / Goe1 / Go1 / JCM 11833 / OCM 88) (Methanosarcina frisia).